A 1598-amino-acid chain; its full sequence is Pentafunctional AROM polypeptide (1598 aa).

The 3-dehydroquinate synthase stretch occupies residues 1–384 (MGVPTKISIL…YEPRACTVSN (384 aa)). Residues 44–46 (DTN), 81–84 (ESSK), 114–116 (GGV), and D119 each bind NAD(+). R130 is a binding site for 7-phospho-2-dehydro-3-deoxy-D-arabino-heptonate. Residue 139 to 140 (TT) participates in NAD(+) binding. 2 residues coordinate 7-phospho-2-dehydro-3-deoxy-D-arabino-heptonate: D146 and K152. K161 contacts NAD(+). N162 contributes to the 7-phospho-2-dehydro-3-deoxy-D-arabino-heptonate binding site. Residues 179–182 (FLNT) and N190 each bind NAD(+). Zn(2+) is bound at residue E194. Residues 194–197 (EVIK) and K250 each bind 7-phospho-2-dehydro-3-deoxy-D-arabino-heptonate. The Proton acceptor; for 3-dehydroquinate synthase activity role is filled by E260. Residues 264-268 (RNLLN) and H271 each bind 7-phospho-2-dehydro-3-deoxy-D-arabino-heptonate. H271 provides a ligand contact to Zn(2+). The active-site Proton acceptor; for 3-dehydroquinate synthase activity is H275. Positions 287 and 356 each coordinate 7-phospho-2-dehydro-3-deoxy-D-arabino-heptonate. Residue H287 participates in Zn(2+) binding. The tract at residues 397–842 (VYPGFPKSLN…WDTLAQTFKV (446 aa)) is EPSP synthase. Catalysis depends on C824, which acts as the For EPSP synthase activity. The interval 867–1059 (AASIFIIGMR…RRKENTFFVS (193 aa)) is shikimate kinase. 874-881 (GMRGAGKT) serves as a coordination point for ATP. A 3-dehydroquinase region spans residues 1060–1280 (LTFPDLTPAS…AAPGQLSARE (221 aa)). The active-site Proton acceptor; for 3-dehydroquinate dehydratase activity is the H1183. The active-site Schiff-base intermediate with substrate; for 3-dehydroquinate dehydratase activity is the K1211. A shikimate dehydrogenase region spans residues 1293–1598 (AKKFAVIGKP…GVSSSDDIIS (306 aa)).

It in the N-terminal section; belongs to the sugar phosphate cyclases superfamily. Dehydroquinate synthase family. This sequence in the 2nd section; belongs to the EPSP synthase family. The protein in the 3rd section; belongs to the shikimate kinase family. In the 4th section; belongs to the type-I 3-dehydroquinase family. It in the C-terminal section; belongs to the shikimate dehydrogenase family. In terms of assembly, homodimer. Zn(2+) serves as cofactor.

Its subcellular location is the cytoplasm. It carries out the reaction 7-phospho-2-dehydro-3-deoxy-D-arabino-heptonate = 3-dehydroquinate + phosphate. The catalysed reaction is 3-dehydroquinate = 3-dehydroshikimate + H2O. The enzyme catalyses shikimate + NADP(+) = 3-dehydroshikimate + NADPH + H(+). It catalyses the reaction shikimate + ATP = 3-phosphoshikimate + ADP + H(+). It carries out the reaction 3-phosphoshikimate + phosphoenolpyruvate = 5-O-(1-carboxyvinyl)-3-phosphoshikimate + phosphate. The protein operates within metabolic intermediate biosynthesis; chorismate biosynthesis; chorismate from D-erythrose 4-phosphate and phosphoenolpyruvate: step 2/7. It participates in metabolic intermediate biosynthesis; chorismate biosynthesis; chorismate from D-erythrose 4-phosphate and phosphoenolpyruvate: step 3/7. Its pathway is metabolic intermediate biosynthesis; chorismate biosynthesis; chorismate from D-erythrose 4-phosphate and phosphoenolpyruvate: step 4/7. It functions in the pathway metabolic intermediate biosynthesis; chorismate biosynthesis; chorismate from D-erythrose 4-phosphate and phosphoenolpyruvate: step 5/7. The protein operates within metabolic intermediate biosynthesis; chorismate biosynthesis; chorismate from D-erythrose 4-phosphate and phosphoenolpyruvate: step 6/7. Functionally, the AROM polypeptide catalyzes 5 consecutive enzymatic reactions in prechorismate polyaromatic amino acid biosynthesis. This is Pentafunctional AROM polypeptide from Paracoccidioides lutzii (strain ATCC MYA-826 / Pb01) (Paracoccidioides brasiliensis).